A 501-amino-acid chain; its full sequence is Putative matrix metalloproteinase (501 aa).

An N-terminal signal peptide occupies residues 1–26; sequence MMPQYERKQIIIHISCVIICVVVTLT. N48, N58, N61, N94, N116, and N163 each carry an N-linked (GlcNAc...) asparagine; by host glycan. Residue H179 coordinates Zn(2+). E180 is a catalytic residue. Residues H183 and H189 each coordinate Zn(2+). N-linked (GlcNAc...) asparagine; by host glycans are attached at residues N192, N267, N280, and N291. One copy of the Hemopexin repeat lies at 311–356; sequence TGHIDTISVIRGELYIFVDEYHWRFRSNGLLYSGYPLKTTHSWSVP. N379 and N493 each carry an N-linked (GlcNAc...) asparagine; by host glycan.

Belongs to the peptidase M10A family. Zn(2+) serves as cofactor.

The protein is Putative matrix metalloproteinase of Trichoplusia ni ascovirus 2c (TnAV-2c).